The chain runs to 119 residues: uncharacterized protein (119 aa).

The helical transmembrane segment at 30–50 threads the bilayer; it reads LMTLPCVLFLSSFGQAVIVVL.

Its subcellular location is the membrane. This is an uncharacterized protein from Saccharomyces cerevisiae (strain ATCC 204508 / S288c) (Baker's yeast).